The chain runs to 120 residues: Non-specific lipid-transfer protein (120 aa).

The signal sequence occupies residues 1 to 26; the sequence is MGVLRSSFVAMMVMYMVLATTPNAEA. Cystine bridges form between Cys30/Cys79, Cys40/Cys56, Cys57/Cys102, and Cys77/Cys116.

The protein belongs to the plant LTP family. In terms of tissue distribution, expressed in protoderm cells of somatic and zygotic embryos, and transiently expressed in epidermal cell layers of leaves, flowers and seeds.

Plant non-specific lipid-transfer proteins transfer phospholipids as well as galactolipids across membranes. May play a role in wax or cutin deposition in the cell walls of expanding epidermal cells and certain secretory tissues. The polypeptide is Non-specific lipid-transfer protein (EP2) (Daucus carota (Wild carrot)).